A 671-amino-acid chain; its full sequence is NADH-quinone oxidoreductase subunit G (671 aa).

In terms of domain architecture, 2Fe-2S ferredoxin-type spans 1–78; sequence MIKLNVDGSE…GMVIHTDTPM (78 aa). [2Fe-2S] cluster-binding residues include Cys34, Cys45, Cys48, and Cys62. The 40-residue stretch at 78–117 folds into the 4Fe-4S His(Cys)3-ligated-type domain; it reads MVKKAREGVMEFLLINHPLDCPICDQGGECNLQDQAFRYG. His94, Cys98, Cys101, Cys107, Cys146, Cys149, Cys152, and Cys196 together coordinate [4Fe-4S] cluster. The 4Fe-4S Mo/W bis-MGD-type domain maps to 215–271; sequence LKHTASIGVHDAEGSNIRIDSRGDEVMRILPRVNEEINEEWLSDKNRFSYDGLKYQR.

It belongs to the complex I 75 kDa subunit family. [2Fe-2S] cluster is required as a cofactor. Requires [4Fe-4S] cluster as cofactor.

The catalysed reaction is a quinone + NADH + 5 H(+)(in) = a quinol + NAD(+) + 4 H(+)(out). NDH-1 shuttles electrons from NADH, via FMN and iron-sulfur (Fe-S) centers, to quinones in the respiratory chain. Couples the redox reaction to proton translocation (for every two electrons transferred, four hydrogen ions are translocated across the cytoplasmic membrane), and thus conserves the redox energy in a proton gradient. The chain is NADH-quinone oxidoreductase subunit G (nuoG) from Rickettsia conorii (strain ATCC VR-613 / Malish 7).